A 579-amino-acid polypeptide reads, in one-letter code: Nuclear receptor subfamily 1 group D member 2 (579 aa).

The tract at residues 1-60 (MEVNAGGVIAYISSSSSASSPASCHSEGSENSFQSSSSSVPSSPNSSNSDTNGNPKNGDL) is required for phosphorylation by CSNK1E and cytoplasmic localization. The modulating stretch occupies residues 1 to 99 (MEVNAGGVIA…HSGVTKFSGM (99 aa)). Low complexity predominate over residues 13-54 (SSSSSASSPASCHSEGSENSFQSSSSSVPSSPNSSNSDTNGN). The interval 13-61 (SSSSSASSPASCHSEGSENSFQSSSSSVPSSPNSSNSDTNGNPKNGDLA) is disordered. Position 46 is a phosphoserine; by GSK3-beta (serine 46). The nuclear receptor DNA-binding region spans 100–176 (VLLCKVCGDV…VGMSRDAVRF (77 aa)). NR C4-type zinc fingers lie at residues 103-123 (CKVC…CEGC) and 140-164 (CLKN…FKKC). 2 positions are modified to N6-acetyllysine; by KAT5: lysine 162 and lysine 163. The segment at 222–250 (PAQEQLRPKPQLEQENIKSSSPPSSDFAK) is disordered. The span at 227-237 (LRPKPQLEQEN) shows a compositional bias: basic and acidic residues. 2 cysteine pairs are disulfide-bonded: cysteine 337–cysteine 343 and cysteine 374–cysteine 384. One can recognise an NR LBD domain in the interval 369-579 (KNSYLCNTGG…EELLAFKVHP (211 aa)). Heme contacts are provided by cysteine 384 and histidine 568. The tract at residues 397-579 (SGHEIWEEFS…EELLAFKVHP (183 aa)) is interaction with ZNHIT1.

This sequence belongs to the nuclear hormone receptor family. NR1 subfamily. As to quaternary structure, binds DNA as a monomer or a homodimer. Interacts with NCOA5 coactivator, leading to a strong increase of transcription of target genes. Interacts (via N-terminus) with KAT5. Interacts (via C-terminus) with HDAC1. Interacts with ZNHIT1. Interacts with SIAH2. In terms of processing, deacetylated by HDAC1. Acetylation and deacetylation regulate its transcriptional regulatory activity. Under more reducing intracellular redox conditions, Cys-384 is in its heme-bound state, which is optimal for recruitment of the NCOR1/HDAC3 corepressor complex and repression of target genes. When subjected to oxidative stress conditions, Cys-384 undergoes oxidation to form a disulfide bridge with Cys-374, also triggering a ligand switch that results in release of bound heme and derepression of target genes. Post-translationally, ubiquitinated by SIAH2; leading to proteasomal degradation. In terms of processing, phosphorylated by CSNK1E; phosphorylation enhances its cytoplasmic localization. Widely expressed. Expressed at high levels in the liver, adipose tissue, skeletal muscle and brain. Expression oscillates diurnally in the suprachiasmatic nucleus (SCN) of the hypothalamus as well as in peripheral tissues.

Its subcellular location is the nucleus. The protein localises to the cytoplasm. The heme-bound form can bind gaseous signaling molecules such as CO and nitric oxide (NO) and NO can reverse its transcriptional repressor activity. Its function is as follows. Transcriptional repressor which coordinates circadian rhythm and metabolic pathways in a heme-dependent manner. Integral component of the complex transcription machinery that governs circadian rhythmicity and forms a critical negative limb of the circadian clock by directly repressing the expression of core clock components BMAL1 and CLOCK. Also regulates genes involved in metabolic functions, including lipid metabolism and the inflammatory response. Acts as a receptor for heme which stimulates its interaction with the NCOR1/HDAC3 corepressor complex, enhancing transcriptional repression. Recognizes two classes of DNA response elements within the promoter of its target genes and can bind to DNA as either monomers or homodimers, depending on the nature of the response element. Binds as a monomer to a response element composed of the consensus half-site motif 5'-[A/G]GGTCA-3' preceded by an A/T-rich 5' sequence (RevRE), or as a homodimer to a direct repeat of the core motif spaced by two nuclegotides (RevDR-2). Acts as a potent competitive repressor of ROR alpha (RORA) function and also negatively regulates the expression of NR1D1. Regulates lipid and energy homeostasis in the skeletal muscle via repression of genes involved in lipid metabolism and myogenesis including: CD36, FABP3, FABP4, UCP3, SCD1 and MSTN. Regulates hepatic lipid metabolism via the repression of APOC3. Represses gene expression at a distance in macrophages by inhibiting the transcription of enhancer-derived RNAs (eRNAs). In addition to its activity as a repressor, can also act as a transcriptional activator. Acts as a transcriptional activator of the sterol regulatory element-binding protein 1 (SREBF1) and the inflammatory mediator interleukin-6 (IL6) in the skeletal muscle. Plays a role in the regulation of circadian sleep/wake cycle; essential for maintaining wakefulness during the dark phase or active period. Key regulator of skeletal muscle mitochondrial function; negatively regulates the skeletal muscle expression of core clock genes and genes involved in mitochondrial biogenesis, fatty acid beta-oxidation and lipid metabolism. May play a role in the circadian control of neutrophilic inflammation in the lung. The sequence is that of Nuclear receptor subfamily 1 group D member 2 from Homo sapiens (Human).